Here is a 409-residue protein sequence, read N- to C-terminus: Peptidase T (409 aa).

A Zn(2+)-binding site is contributed by His78. Residue Asp80 is part of the active site. Asp140 contributes to the Zn(2+) binding site. The active-site Proton acceptor is the Glu174. 3 residues coordinate Zn(2+): Glu175, Asp197, and His379.

The protein belongs to the peptidase M20B family. It depends on Zn(2+) as a cofactor.

The protein resides in the cytoplasm. It carries out the reaction Release of the N-terminal residue from a tripeptide.. Its function is as follows. Cleaves the N-terminal amino acid of tripeptides. In Aliivibrio salmonicida (strain LFI1238) (Vibrio salmonicida (strain LFI1238)), this protein is Peptidase T.